The chain runs to 356 residues: Tyrosine recombinase XerS (356 aa).

Positions 16-121 constitute a Core-binding (CB) domain; sequence LMPWYVLEYY…ALSSLYKYLT (106 aa). One can recognise a Tyr recombinase domain in the interval 169–354; it reads GFLTYIDQEH…VNDEQKNALD (186 aa). Catalysis depends on residues Arg210, Lys234, His306, Arg309, and His332. Catalysis depends on Tyr341, which acts as the O-(3'-phospho-DNA)-tyrosine intermediate.

This sequence belongs to the 'phage' integrase family. XerS subfamily.

It is found in the cytoplasm. FtsK is required for recombination. In terms of biological role, site-specific tyrosine recombinase, which acts by catalyzing the cutting and rejoining of the recombining DNA molecules. Essential to convert dimers of the bacterial chromosome into monomers to permit their segregation at cell division. The sequence is that of Tyrosine recombinase XerS from Streptococcus pneumoniae (strain P1031).